A 111-amino-acid chain; its full sequence is Shuttling pre-60S factor C23B6.02c (111 aa).

2 stretches are compositionally biased toward basic residues: residues 1-12 (MAKKQSIRSRNF) and 59-73 (SKKK…KKAK). Disordered stretches follow at residues 1-25 (MAKK…DSST) and 47-111 (ALRS…QGDE). The segment covering 83–111 (QAREERLDTKISKSLQKQEKLKARKQGDE) has biased composition (basic and acidic residues).

This sequence belongs to the ECM1 family. In terms of assembly, associates with the pre-60S ribosomal particle and the nucleopore complex.

Its subcellular location is the nucleus. The protein resides in the nucleolus. The protein localises to the cytoplasm. Its function is as follows. Pre-ribosomal factor involved in 60S ribosomal protein subunit export from the nucleus. The protein is Shuttling pre-60S factor C23B6.02c of Schizosaccharomyces pombe (strain 972 / ATCC 24843) (Fission yeast).